The following is a 153-amino-acid chain: Cytochrome c-type biogenesis protein CcmE (153 aa).

Topologically, residues 1-8 are cytoplasmic; it reads MTPVQRRR. A helical; Signal-anchor for type II membrane protein transmembrane segment spans residues 9–29; that stretch reads LAWVLLALLASGLATALVAMA. Residues 30–153 lie on the Extracellular side of the membrane; the sequence is LERNIAYLYT…DVPVTAPEVR (124 aa). Heme is bound by residues His123 and Tyr127.

The protein belongs to the CcmE/CycJ family.

It localises to the cell membrane. Its function is as follows. Heme chaperone required for the biogenesis of c-type cytochromes. Transiently binds heme delivered by CcmC and transfers the heme to apo-cytochromes in a process facilitated by CcmF and CcmH. This Stenotrophomonas maltophilia (strain K279a) protein is Cytochrome c-type biogenesis protein CcmE.